We begin with the raw amino-acid sequence, 96 residues long: CRISPR-associated endoribonuclease Cas2 (96 aa).

Residue Asp8 participates in Mg(2+) binding.

The protein belongs to the CRISPR-associated endoribonuclease Cas2 protein family. Homodimer, forms a heterotetramer with a Cas1 homodimer. Requires Mg(2+) as cofactor.

Its function is as follows. CRISPR (clustered regularly interspaced short palindromic repeat), is an adaptive immune system that provides protection against mobile genetic elements (viruses, transposable elements and conjugative plasmids). CRISPR clusters contain sequences complementary to antecedent mobile elements and target invading nucleic acids. CRISPR clusters are transcribed and processed into CRISPR RNA (crRNA). Functions as a ssRNA-specific endoribonuclease. Involved in the integration of spacer DNA into the CRISPR cassette. In Chlorobaculum tepidum (strain ATCC 49652 / DSM 12025 / NBRC 103806 / TLS) (Chlorobium tepidum), this protein is CRISPR-associated endoribonuclease Cas2.